The chain runs to 386 residues: Cytochrome b (386 aa).

4 consecutive transmembrane segments (helical) span residues 32-52, 76-98, 113-133, and 179-199; these read FGSL…TLAM, WLIR…LHVG, TWII…LGYV, and FFAL…MHLI. Residues His82 and His96 each coordinate heme b. The heme b site is built by His183 and His197. A ubiquinone is bound at residue His202. Helical transmembrane passes span 226-246, 290-310, 322-342, and 349-369; these read YIFK…LFVF, LLGV…PITD, LSKV…QLGA, and FIEF…VIMP.

This sequence belongs to the cytochrome b family. Fungal cytochrome b-c1 complex contains 10 subunits; 3 respiratory subunits, 2 core proteins and 5 low-molecular weight proteins. Cytochrome b-c1 complex is a homodimer. The cofactor is heme b.

It is found in the mitochondrion inner membrane. In terms of biological role, component of the ubiquinol-cytochrome c reductase complex (complex III or cytochrome b-c1 complex) that is part of the mitochondrial respiratory chain. The b-c1 complex mediates electron transfer from ubiquinol to cytochrome c. Contributes to the generation of a proton gradient across the mitochondrial membrane that is then used for ATP synthesis. This Talaromyces marneffei (Penicillium marneffei) protein is Cytochrome b (cob).